We begin with the raw amino-acid sequence, 114 residues long: Large ribosomal subunit protein bL20 (114 aa).

This sequence belongs to the bacterial ribosomal protein bL20 family.

In terms of biological role, binds directly to 23S ribosomal RNA and is necessary for the in vitro assembly process of the 50S ribosomal subunit. It is not involved in the protein synthesizing functions of that subunit. This chain is Large ribosomal subunit protein bL20, found in Anaeromyxobacter dehalogenans (strain 2CP-1 / ATCC BAA-258).